The primary structure comprises 606 residues: Transmembrane 9 superfamily member 1 (606 aa).

The N-terminal stretch at 1–27 is a signal peptide; sequence MTVLGYPRSWSCHCLPVLILLLGIGHG. The N-linked (GlcNAc...) asparagine glycan is linked to Asn-178. 4 consecutive transmembrane segments (helical) span residues 237-257, 310-330, 339-359, and 373-393; these read LSII…AVIL, VLGV…MALL, GAIN…SGYV, and VWNI…TWSV. N-linked (GlcNAc...) asparagine glycosylation occurs at Asn-401. Transmembrane regions (helical) follow at residues 412-432, 469-489, 499-519, and 535-555; these read ILLL…IGGI, VGGF…FATV, GILF…SIAL, and SVLS…FYYA. Asn-559 carries an N-linked (GlcNAc...) asparagine glycan. A helical transmembrane segment spans residues 570–590; sequence FGYSLLTGYVFFLMLGTISFF.

It belongs to the nonaspanin (TM9SF) (TC 9.A.2) family.

It is found in the lysosome membrane. Its subcellular location is the cytoplasmic vesicle. The protein resides in the autophagosome membrane. Functionally, plays an essential role in autophagy. The protein is Transmembrane 9 superfamily member 1 (Tm9sf1) of Mus musculus (Mouse).